Consider the following 865-residue polypeptide: MISTKELRNKFISYFESKNHSHQPSSSLIPFGDDTLLFTNAGMVQFKDVFLGLEKRDFSRAVTVQKCLRAGGKHNDLDNVGYTARHHTFFEMLGNFSFGDYFKKDAISFAWEFLTKEIKLPVEKLWVTIYATDDEAFDVWHNHIGLPKERIIRIDSNDNFWSMGDTGPCGPCTEIFYDHGEDVAGGLPGTPDEDGDRYIEIWNIVFMQFNRHADGTVTDLPKPSVDTGMGLERIAAVLQDVHSNYDIDLFQALIKKAQEVTNADDINSPSLKVVADHIRSCAFLIADGVLPSNEGRGYVLRRIIRRAIRHGNKLGAKDIFFYKLVAELINQMGEAYPQLIDKRELIEKTLIKEEELFLKTIENGIKIFDTEIVSLKSDIISGEIAFRLYDTYGFPLDLTADMAREKGLKVDEEAFKEQMLKQKQRSKEAGKFNVDYNSIINSQAKSDFRGYSTLIEDAKVLEIYQDGQPVNAIQAGSTAVIVLDRTPFYAESGGQVGDKGVLEGVGVEFIVEDVQKSGEAILHIGKLSKGILNTYDEVTARVNDSVRLATAANHSATHLLHKVLKIILGSHAEQKGSLVDDNKLRFDFTHDKAISRVEIEQIETLVNQQIRANYPVATIETSQEKAKSLGAEALFGEKYGDIVRVISMGDFSIELCGGTHVAYTGDIGLFKIVSESGIASGIRRIEAITANKAIKYTFATENKLAAIKEITKSNDSNLLDKLQSMLEQLKNQEKEIAKLKKDILSGANSDIKESSIDGIKLIIANLEGVDIKTLREKIDDYKSKNDKMVAVLSTINADKVQFVIGVSKSITSLIKAGDIAKEFSGYIDGKGGGRPDMAQGGGNNSTNIDKALSDLENHISINIKK.

Residues H554, H558, C656, and H660 each coordinate Zn(2+).

Belongs to the class-II aminoacyl-tRNA synthetase family. Zn(2+) is required as a cofactor.

The protein resides in the cytoplasm. The enzyme catalyses tRNA(Ala) + L-alanine + ATP = L-alanyl-tRNA(Ala) + AMP + diphosphate. In terms of biological role, catalyzes the attachment of alanine to tRNA(Ala) in a two-step reaction: alanine is first activated by ATP to form Ala-AMP and then transferred to the acceptor end of tRNA(Ala). Also edits incorrectly charged Ser-tRNA(Ala) and Gly-tRNA(Ala) via its editing domain. The polypeptide is Alanine--tRNA ligase (Francisella philomiragia subsp. philomiragia (strain ATCC 25017 / CCUG 19701 / FSC 153 / O#319-036)).